The primary structure comprises 463 residues: ATP-dependent protease ATPase subunit HslU (463 aa).

Residues Val-21, 63–68 (GVGKTE), Asp-276, Glu-341, and Arg-413 each bind ATP.

It belongs to the ClpX chaperone family. HslU subfamily. As to quaternary structure, a double ring-shaped homohexamer of HslV is capped on each side by a ring-shaped HslU homohexamer. The assembly of the HslU/HslV complex is dependent on binding of ATP.

Its subcellular location is the cytoplasm. ATPase subunit of a proteasome-like degradation complex; this subunit has chaperone activity. The binding of ATP and its subsequent hydrolysis by HslU are essential for unfolding of protein substrates subsequently hydrolyzed by HslV. HslU recognizes the N-terminal part of its protein substrates and unfolds these before they are guided to HslV for hydrolysis. The polypeptide is ATP-dependent protease ATPase subunit HslU (Thermotoga neapolitana (strain ATCC 49049 / DSM 4359 / NBRC 107923 / NS-E)).